The following is a 379-amino-acid chain: Chaperone protein DnaJ (379 aa).

The 65-residue stretch at 5-69 (EFYDRLGVSK…QKRAAYDQYG (65 aa)) folds into the J domain. The segment at 135–217 (GAEKEVSYNR…CHGTGHEKKT (83 aa)) adopts a CR-type zinc-finger fold. Zn(2+)-binding residues include Cys-148, Cys-151, Cys-165, Cys-168, Cys-191, Cys-194, Cys-205, and Cys-208. CXXCXGXG motif repeat units follow at residues 148-155 (CHTCSGSG), 165-172 (CQKCHGSG), 191-198 (CDVCQGSG), and 205-212 (CPTCHGTG).

The protein belongs to the DnaJ family. As to quaternary structure, homodimer. Requires Zn(2+) as cofactor.

It is found in the cytoplasm. Functionally, participates actively in the response to hyperosmotic and heat shock by preventing the aggregation of stress-denatured proteins and by disaggregating proteins, also in an autonomous, DnaK-independent fashion. Unfolded proteins bind initially to DnaJ; upon interaction with the DnaJ-bound protein, DnaK hydrolyzes its bound ATP, resulting in the formation of a stable complex. GrpE releases ADP from DnaK; ATP binding to DnaK triggers the release of the substrate protein, thus completing the reaction cycle. Several rounds of ATP-dependent interactions between DnaJ, DnaK and GrpE are required for fully efficient folding. Also involved, together with DnaK and GrpE, in the DNA replication of plasmids through activation of initiation proteins. This Streptococcus agalactiae serotype V (strain ATCC BAA-611 / 2603 V/R) protein is Chaperone protein DnaJ.